The primary structure comprises 229 residues: DNA repair protein RecO (229 aa).

This sequence belongs to the RecO family.

Functionally, involved in DNA repair and RecF pathway recombination. This Legionella pneumophila (strain Paris) protein is DNA repair protein RecO.